A 665-amino-acid polypeptide reads, in one-letter code: Sodium/glucose cotransporter 1 (665 aa).

The Extracellular segment spans residues 1 to 24; sequence MDSSTLSPAVTATDAPIPSYERIR. The helical transmembrane segment at 25–47 threads the bilayer; sequence NAADISVIVIYFVVVMAVGLWAM. Over 48 to 66 the chain is Cytoplasmic; sequence FSTNRGTVGGFFLAGRSMV. The helical transmembrane segment at 67–90 threads the bilayer; sequence WWPIGASLFASNIGSGHFVGLAGT. The Extracellular segment spans residues 91–95; it reads GAAAG. A helical transmembrane segment spans residues 96-117; it reads IAMGGFEWNALVLVVVLGWIFV. Topologically, residues 118 to 139 are cytoplasmic; it reads PIYIKAGVVTMPEYLRKRFGGK. Residues 140–169 form a helical membrane-spanning segment; it reads RIQIYLSVLSLLLYIFTKISADIFSGAIFI. Over 170-176 the chain is Extracellular; the sequence is NLALGLD. The helical transmembrane segment at 177–193 threads the bilayer; the sequence is IYLAIFILLAITALYTI. Over 194-202 the chain is Cytoplasmic; that stretch reads TGGLAAVIY. Residues 203–221 traverse the membrane as a helical segment; it reads TDTLQTAIMLVGSFILTGF. The Extracellular segment spans residues 222 to 275; the sequence is AFNEVGGYEAFMDKYMKAIPTKVSNGNFTAKEECYTPRADSFHIFRDPITGDMP. Asparagine 248 is a glycosylation site (N-linked (GlcNAc...) asparagine). Cystine bridges form between cysteine 255–cysteine 511, cysteine 255–cysteine 611, cysteine 345–cysteine 351, cysteine 355–cysteine 361, and cysteine 517–cysteine 522. A helical transmembrane segment spans residues 276–295; the sequence is WPGLIFGLAILALWYWCTDQ. Over 296–309 the chain is Cytoplasmic; the sequence is VIVQRCLSAKNMSH. Residues 310–331 form a helical membrane-spanning segment; sequence VKADCTLCGYLKLLPMFLMVMP. The Extracellular portion of the chain corresponds to 332 to 375; sequence GMISRILYTEKIACVLPEECQKYCGTPVGCTNIAYPTLVVELMP. The helical transmembrane segment at 376–406 threads the bilayer; that stretch reads NGLRGLMLSVMMASLMSSLTSIFNSASTLFT. At 407–422 the chain is on the cytoplasmic side; the sequence is MDIYTKIRKKASEKEL. Residues 423-444 traverse the membrane as a helical segment; sequence MIAGRLFILVLIGISIAWVPIV. The Extracellular portion of the chain corresponds to 445–451; it reads QSAQSGQ. A helical transmembrane segment spans residues 452-477; it reads LFDYIQSITSYLGPPIAAVFLLAIFC. Glutamine 457 contributes to the D-glucose binding site. Over 478 to 481 the chain is Cytoplasmic; that stretch reads KRVN. Residues 482 to 504 traverse the membrane as a helical segment; sequence EQGAFWGLILGFLIGISRMITEF. The Extracellular portion of the chain corresponds to 505-525; the sequence is AYGTGSCMEPSNCPKIICGVH. Residues 526-547 form a helical membrane-spanning segment; it reads YLYFAIILFVISVITILIISFL. At 548 to 645 the chain is on the cytoplasmic side; sequence TKPIPDVHLY…TSEKPLWRTV (98 aa). A Phosphoserine modification is found at serine 585. Position 588 is a phosphothreonine (threonine 588). The helical transmembrane segment at 646 to 663 threads the bilayer; that stretch reads VNINGIILLAVAVFCHAY. The Extracellular portion of the chain corresponds to 664 to 665; it reads FA.

It belongs to the sodium:solute symporter (SSF) (TC 2.A.21) family. In terms of processing, N-glycosylation is not necessary for the cotransporter function. As to expression, expressed in enterocytes and enteroendocrine cells of small intestine (at protein level). Expressed in S3 segments of renal proximal tubules (at protein level). Expressed in endometrial glandular and epithelial cells (at protein level).

The protein localises to the apical cell membrane. The enzyme catalyses D-glucose(out) + 2 Na(+)(out) = D-glucose(in) + 2 Na(+)(in). It carries out the reaction D-galactose(out) + 2 Na(+)(out) = D-galactose(in) + 2 Na(+)(in). Enhanced by the interaction with PDZK1IP1/MAP17; but unlike SLC5A2/SGLT2, PDZK1IP1 is not essential for SLC5A1 transporter activity. Possibly modulated by cholesterol binding. Its function is as follows. Electrogenic Na(+)-coupled sugar symporter that actively transports D-glucose or D-galactose at the plasma membrane, with a Na(+) to sugar coupling ratio of 2:1. Transporter activity is driven by a transmembrane Na(+) electrochemical gradient set by the Na(+)/K(+) pump. Has a primary role in the transport of dietary monosaccharides from enterocytes to blood. Responsible for the absorption of D-glucose or D-galactose across the apical brush-border membrane of enterocytes, whereas basolateral exit is provided by GLUT2. Additionally, functions as a D-glucose sensor in enteroendocrine cells, triggering the secretion of the incretins GCG and GIP that control food intake and energy homeostasis. Together with SGLT2, functions in reabsorption of D-glucose from glomerular filtrate, playing a nonredundant role in the S3 segment of the proximal tubules. Transports D-glucose into endometrial epithelial cells, controlling glycogen synthesis and nutritional support for the embryo as well as the decidual transformation of endometrium prior to conception. Acts as a water channel enabling passive water transport in response to the osmotic gradient created upon sugar and Na(+) uptake. Has high water conductivity comparable to aquaporins and therefore is expected to play an important role in transepithelial water permeability, especially in the small intestine. This chain is Sodium/glucose cotransporter 1 (Slc5a1), found in Mus musculus (Mouse).